We begin with the raw amino-acid sequence, 424 residues long: Tyrosine--tRNA ligase (424 aa).

Tyr-37 contacts L-tyrosine. The short motif at 42–51 is the 'HIGH' region element; that stretch reads PTADSLHLGH. Positions 175 and 179 each coordinate L-tyrosine. The 'KMSKS' region signature appears at 235 to 239; sequence KFGKT. Lys-238 contributes to the ATP binding site. Residues 357-414 enclose the S4 RNA-binding domain; it reads ADLMQALVDAELQPSRGQARKTIASNAVTINGEKQSDPEYIFNDEDRLFGRYTLLRRG.

This sequence belongs to the class-I aminoacyl-tRNA synthetase family. TyrS type 1 subfamily. Homodimer.

Its subcellular location is the cytoplasm. It carries out the reaction tRNA(Tyr) + L-tyrosine + ATP = L-tyrosyl-tRNA(Tyr) + AMP + diphosphate + H(+). Catalyzes the attachment of tyrosine to tRNA(Tyr) in a two-step reaction: tyrosine is first activated by ATP to form Tyr-AMP and then transferred to the acceptor end of tRNA(Tyr). In Salmonella enteritidis PT4 (strain P125109), this protein is Tyrosine--tRNA ligase.